The sequence spans 356 residues: UDP-N-acetylglucosamine--N-acetylmuramyl-(pentapeptide) pyrophosphoryl-undecaprenol N-acetylglucosamine transferase (356 aa).

UDP-N-acetyl-alpha-D-glucosamine contacts are provided by residues 12-14, Asn-124, Arg-163, Ser-188, Ile-242, and Gln-287; that span reads TGG.

The protein belongs to the glycosyltransferase 28 family. MurG subfamily.

It is found in the cell inner membrane. The catalysed reaction is di-trans,octa-cis-undecaprenyl diphospho-N-acetyl-alpha-D-muramoyl-L-alanyl-D-glutamyl-meso-2,6-diaminopimeloyl-D-alanyl-D-alanine + UDP-N-acetyl-alpha-D-glucosamine = di-trans,octa-cis-undecaprenyl diphospho-[N-acetyl-alpha-D-glucosaminyl-(1-&gt;4)]-N-acetyl-alpha-D-muramoyl-L-alanyl-D-glutamyl-meso-2,6-diaminopimeloyl-D-alanyl-D-alanine + UDP + H(+). It functions in the pathway cell wall biogenesis; peptidoglycan biosynthesis. Cell wall formation. Catalyzes the transfer of a GlcNAc subunit on undecaprenyl-pyrophosphoryl-MurNAc-pentapeptide (lipid intermediate I) to form undecaprenyl-pyrophosphoryl-MurNAc-(pentapeptide)GlcNAc (lipid intermediate II). The polypeptide is UDP-N-acetylglucosamine--N-acetylmuramyl-(pentapeptide) pyrophosphoryl-undecaprenol N-acetylglucosamine transferase (Pseudomonas savastanoi pv. phaseolicola (strain 1448A / Race 6) (Pseudomonas syringae pv. phaseolicola (strain 1448A / Race 6))).